A 419-amino-acid polypeptide reads, in one-letter code: MGARAIFRGFNRPSRVLMINQFGINIGFYMLMPYLADYLAGPLGLAAWAVGLVMGVRNFSQQGMFFVGGTLADRFGYKPLIIAGCLIRTGGFALLVVAQSLPSVLIAAAATGFAGALFNPAVRGYLAAEAGERKIEAFAMFNVFYQSGILLGPLVGLVLLALDFRITVLAAAGVFGLLTVAQLVALPQHRADSEREKTSILQDWRVVVRNRPFLTLAAAMTGCYALSFQIYLALPMQASILMPRNQYLLIAAMFAVSGLVAVGGQLRITRWFAVRWGAERSLVVGATILAASFIPVAVIPNGQRFGVAVAVMALVLSASLLAVASAALFPFEMRAVVALSGDRLVATHYGFYSTIVGVGVLVGNLAIGSLMSAARRLNTDEIVWGGLILVGIVAVAGLRRLDTFTSGSQNMTGRWAAPR.

12 helical membrane passes run 15 to 35 (RVLM…MPYL), 36 to 56 (ADYL…VMGV), 77 to 99 (YKPL…VVAQ), 104 to 126 (VLIA…RGYL), 140 to 160 (MFNV…LVLL), 166 to 186 (ITVL…LVAL), 213 to 233 (FLTL…IYLA), 246 to 266 (QYLL…GGQL), 282 to 302 (LVVG…IPNG), 309 to 329 (VAVM…AALF), 351 to 371 (FYST…GSLM), and 377 to 397 (LNTD…AVAG).

Belongs to the major facilitator superfamily.

It localises to the cell membrane. This is an uncharacterized protein from Mycobacterium tuberculosis (strain CDC 1551 / Oshkosh).